Reading from the N-terminus, the 404-residue chain is L-cysteine:1D-myo-inositol 2-amino-2-deoxy-alpha-D-glucopyranoside ligase (404 aa).

The tract at residues 1-20 is disordered; that stretch reads MRTWPTPDVPPLPRTGAPAP. Cysteine 45 lines the Zn(2+) pocket. L-cysteinyl-5'-AMP is bound by residues 45–48, threonine 60, and 83–85; these read CGIT and NVT. The 'HIGH' region motif lies at 47-57; sequence ITPYDATHLGH. The 'ERGGDP' region signature appears at 185–190; that stretch reads ERGGDP. Residues 185–216 are disordered; it reads ERGGDPDRPGKKHPLDPALWRGEQPGEPSWDG. The span at 186 to 199 shows a compositional bias: basic and acidic residues; sequence RGGDPDRPGKKHPL. Tryptophan 226 is a binding site for L-cysteinyl-5'-AMP. Cysteine 230 contributes to the Zn(2+) binding site. L-cysteinyl-5'-AMP is bound at residue 248 to 250; the sequence is GAD. Histidine 255 serves as a coordination point for Zn(2+). Residue leucine 280 participates in L-cysteinyl-5'-AMP binding. The short motif at 286-290 is the 'KMSKS' region element; sequence KMSKS.

The protein belongs to the class-I aminoacyl-tRNA synthetase family. MshC subfamily. In terms of assembly, monomer. Zn(2+) serves as cofactor.

It catalyses the reaction 1D-myo-inositol 2-amino-2-deoxy-alpha-D-glucopyranoside + L-cysteine + ATP = 1D-myo-inositol 2-(L-cysteinylamino)-2-deoxy-alpha-D-glucopyranoside + AMP + diphosphate + H(+). Its function is as follows. Catalyzes the ATP-dependent condensation of GlcN-Ins and L-cysteine to form L-Cys-GlcN-Ins. The sequence is that of L-cysteine:1D-myo-inositol 2-amino-2-deoxy-alpha-D-glucopyranoside ligase from Xylanimonas cellulosilytica (strain DSM 15894 / JCM 12276 / CECT 5975 / KCTC 9989 / LMG 20990 / NBRC 107835 / XIL07).